The chain runs to 305 residues: Transmembrane protein 74 (305 aa).

Ser11 bears the Phosphoserine mark. The segment covering Gln122–Gly132 has biased composition (polar residues). A disordered region spans residues Gln122–Asn143. 2 helical membrane-spanning segments follow: residues Phe178–Val198 and Val232–Met252.

This sequence belongs to the TMEM74 family.

Its subcellular location is the lysosome membrane. The protein resides in the cytoplasmic vesicle. It is found in the autophagosome membrane. Functionally, plays an essential role in autophagy. TMEM74-induced autophagy may involve PI3K signal transduction. This Mus musculus (Mouse) protein is Transmembrane protein 74 (Tmem74).